The chain runs to 312 residues: Malate dehydrogenase (312 aa).

NAD(+) contacts are provided by residues 7–13 (GAAGGIG) and Asp-34. Substrate-binding residues include Arg-81 and Arg-87. Residues Asn-94 and 117–119 (ITN) contribute to the NAD(+) site. Residues Asn-119 and Arg-153 each coordinate substrate. The Proton acceptor role is filled by His-177. Met-227 is a binding site for NAD(+).

The protein belongs to the LDH/MDH superfamily. MDH type 1 family. Homodimer.

It carries out the reaction (S)-malate + NAD(+) = oxaloacetate + NADH + H(+). In terms of biological role, catalyzes the reversible oxidation of malate to oxaloacetate. In Yersinia pseudotuberculosis serotype O:1b (strain IP 31758), this protein is Malate dehydrogenase.